The primary structure comprises 72 residues: Large ribosomal subunit protein uL29 (72 aa).

It belongs to the universal ribosomal protein uL29 family.

This is Large ribosomal subunit protein uL29 from Chlamydia felis (strain Fe/C-56) (Chlamydophila felis).